The primary structure comprises 294 residues: 4-hydroxy-tetrahydrodipicolinate synthase (294 aa).

Thr-49 lines the pyruvate pocket. Tyr-136 acts as the Proton donor/acceptor in catalysis. Lys-164 (schiff-base intermediate with substrate) is an active-site residue. Ile-207 is a binding site for pyruvate.

Belongs to the DapA family. Homotetramer; dimer of dimers.

The protein localises to the cytoplasm. It catalyses the reaction L-aspartate 4-semialdehyde + pyruvate = (2S,4S)-4-hydroxy-2,3,4,5-tetrahydrodipicolinate + H2O + H(+). Its pathway is amino-acid biosynthesis; L-lysine biosynthesis via DAP pathway; (S)-tetrahydrodipicolinate from L-aspartate: step 3/4. Functionally, catalyzes the condensation of (S)-aspartate-beta-semialdehyde [(S)-ASA] and pyruvate to 4-hydroxy-tetrahydrodipicolinate (HTPA). In Natronomonas pharaonis (strain ATCC 35678 / DSM 2160 / CIP 103997 / JCM 8858 / NBRC 14720 / NCIMB 2260 / Gabara) (Halobacterium pharaonis), this protein is 4-hydroxy-tetrahydrodipicolinate synthase.